A 367-amino-acid chain; its full sequence is DNA replication and repair protein RecF (367 aa).

ATP is bound at residue 30-37 (GANGSGKT).

The protein belongs to the RecF family.

It is found in the cytoplasm. Functionally, the RecF protein is involved in DNA metabolism; it is required for DNA replication and normal SOS inducibility. RecF binds preferentially to single-stranded, linear DNA. It also seems to bind ATP. The protein is DNA replication and repair protein RecF of Pseudomonas putida (strain GB-1).